Consider the following 214-residue polypeptide: Attacin (214 aa).

Positions methionine 1–histidine 19 are cleaved as a signal peptide. The propeptide occupies valine 20–arginine 26.

The protein belongs to the attacin/sarcotoxin-2 family. Highest expression in fat body and hemocytes and to a much lesser extent in Malpighian tubules, silk gland and midgut.

The protein resides in the secreted. Hemolymph antibacterial protein. Has a wide spectrum of activity against both Gram-positive and Gram-negative bacteria. This chain is Attacin, found in Bombyx mori (Silk moth).